Consider the following 491-residue polypeptide: MEEGKMDENEWGYHGEGNKSLVVAHAQRCVVLRFLKFPPNRKKTSEEIFQHLQNIVDFGKNVMKEFLGENYVHYGEVVQLPLEFVKQLCLKIQSERPESRCDKDLDTLSGYAMCLPNLTRLQTYRFAEHRPILCVEIKPKCGFIPFSSDVTHEMKHKVCRYCMHQHLKVATGKWKQISKYCPLDLYSGNKQRMHFALKSLLQEAQNNLKIFKNGELIYGCKDARSPVADWSELAHHLKPFFFPSNGLASGPHCTRAVIRELVHVITRVLLSGSDKGRAGTLSPGLGPQGPRVCEASPFSRSLRCQGKNTPERSGLPKGCLLYKTLQVQMLDLLDIEGLYPLYNRVERYLEEFPEERKTLQIDGPYDEAFYQKLLDLSTEDDGTVAFALTKVQQYRVAMTAKDCSIMIALSPCLQDASSDQRPVVPSSRSRFAFSVSVLDLDLKPYESIPHQYKLDGKIVNYYSKTVRAKDNAVMSTRFKESEDCTLVLHKV.

Positions 136-140 (EIKPK) match the EXKPK motif motif. Ser282 is modified (phosphoserine).

This sequence belongs to the IPK1 type 2 family. As to expression, ubiquitously expressed, with high expression in heart, brain, testis and placenta.

The protein resides in the cytoplasm. The protein localises to the nucleus. The enzyme catalyses 1D-myo-inositol 1,3,4,5,6-pentakisphosphate + ATP = 1D-myo-inositol hexakisphosphate + ADP + H(+). Its function is as follows. Phosphorylates Ins(1,3,4,5,6)P5 at position 2 to form Ins(1,2,3,4,5,6)P6 (InsP6 or phytate). InsP6 is involved in many processes such as mRNA export, non-homologous end-joining, endocytosis, ion channel regulation. It also protects cells from TNF-alpha-induced apoptosis. The sequence is that of Inositol-pentakisphosphate 2-kinase (IPPK) from Homo sapiens (Human).